The following is a 918-amino-acid chain: Leucine--tRNA ligase (918 aa).

The 'HIGH' region motif lies at 40 to 51 (PYPSGVGLHVGH). A 'KMSKS' region motif is present at residues 692–696 (KMSKS). Position 695 (lysine 695) interacts with ATP.

The protein belongs to the class-I aminoacyl-tRNA synthetase family.

Its subcellular location is the cytoplasm. The enzyme catalyses tRNA(Leu) + L-leucine + ATP = L-leucyl-tRNA(Leu) + AMP + diphosphate. The protein is Leucine--tRNA ligase of Azobacteroides pseudotrichonymphae genomovar. CFP2.